The following is a 490-amino-acid chain: Probable cytosol aminopeptidase (490 aa).

2 residues coordinate Mn(2+): Lys257 and Asp262. Lys269 is a catalytic residue. Positions 281, 341, and 343 each coordinate Mn(2+). Residue Arg345 is part of the active site.

This sequence belongs to the peptidase M17 family. Mn(2+) is required as a cofactor.

Its subcellular location is the cytoplasm. It carries out the reaction Release of an N-terminal amino acid, Xaa-|-Yaa-, in which Xaa is preferably Leu, but may be other amino acids including Pro although not Arg or Lys, and Yaa may be Pro. Amino acid amides and methyl esters are also readily hydrolyzed, but rates on arylamides are exceedingly low.. The catalysed reaction is Release of an N-terminal amino acid, preferentially leucine, but not glutamic or aspartic acids.. Its function is as follows. Presumably involved in the processing and regular turnover of intracellular proteins. Catalyzes the removal of unsubstituted N-terminal amino acids from various peptides. This Prochlorococcus marinus (strain AS9601) protein is Probable cytosol aminopeptidase.